A 186-amino-acid polypeptide reads, in one-letter code: Mediator of RNA polymerase II transcription subunit 10a (186 aa).

It belongs to the Mediator complex subunit 10 family. Mono-, di- and oligomers. Component of the Mediator complex. Interacts with GEBPL.

It is found in the nucleus. Component of the Mediator complex, a coactivator involved in the regulated transcription of nearly all RNA polymerase II-dependent genes. Mediator functions as a bridge to convey information from gene-specific regulatory proteins to the basal RNA polymerase II transcription machinery. The Mediator complex, having a compact conformation in its free form, is recruited to promoters by direct interactions with regulatory proteins and serves for the assembly of a functional pre-initiation complex with RNA polymerase II and the general transcription factors. The protein is Mediator of RNA polymerase II transcription subunit 10a of Arabidopsis thaliana (Mouse-ear cress).